Reading from the N-terminus, the 199-residue chain is Peptidyl-tRNA hydrolase (199 aa).

TRNA is bound at residue Y15. H20 (proton acceptor) is an active-site residue. The tRNA site is built by Y66, N68, and N114.

Belongs to the PTH family. In terms of assembly, monomer.

It is found in the cytoplasm. The catalysed reaction is an N-acyl-L-alpha-aminoacyl-tRNA + H2O = an N-acyl-L-amino acid + a tRNA + H(+). Its function is as follows. Hydrolyzes ribosome-free peptidyl-tRNAs (with 1 or more amino acids incorporated), which drop off the ribosome during protein synthesis, or as a result of ribosome stalling. Catalyzes the release of premature peptidyl moieties from peptidyl-tRNA molecules trapped in stalled 50S ribosomal subunits, and thus maintains levels of free tRNAs and 50S ribosomes. This chain is Peptidyl-tRNA hydrolase, found in Burkholderia multivorans (strain ATCC 17616 / 249).